The sequence spans 188 residues: Dual specificity protein phosphatase 18 (188 aa).

A Tyrosine-protein phosphatase domain is found at 19–160 (GLSQITSSLY…LIHYEFQLFG (142 aa)). Residues 95 to 141 (MKQGRTLLHCAAGVSRSAALCLAYLMKYHAMSLLDAHTWTKSCRPII) form a sufficient for mitochondrial localization region. C104 (phosphocysteine intermediate) is an active-site residue.

This sequence belongs to the protein-tyrosine phosphatase family. Non-receptor class dual specificity subfamily.

Its subcellular location is the cytoplasm. It localises to the nucleus. The protein resides in the mitochondrion inner membrane. It catalyses the reaction O-phospho-L-tyrosyl-[protein] + H2O = L-tyrosyl-[protein] + phosphate. The catalysed reaction is O-phospho-L-seryl-[protein] + H2O = L-seryl-[protein] + phosphate. The enzyme catalyses O-phospho-L-threonyl-[protein] + H2O = L-threonyl-[protein] + phosphate. Functionally, can dephosphorylate single and diphosphorylated synthetic MAPK peptides, with preference for the phosphotyrosine and diphosphorylated forms over phosphothreonine. In vitro, dephosphorylates p-nitrophenyl phosphate (pNPP). This Bos taurus (Bovine) protein is Dual specificity protein phosphatase 18 (DUSP18).